A 255-amino-acid polypeptide reads, in one-letter code: Triosephosphate isomerase (255 aa).

10 to 12 (NWK) contributes to the substrate binding site. The active-site Electrophile is the histidine 96. Catalysis depends on glutamate 169, which acts as the Proton acceptor. Substrate-binding positions include glycine 175, serine 214, and 235 to 236 (GG).

It belongs to the triosephosphate isomerase family. Homodimer.

The protein localises to the cytoplasm. The enzyme catalyses D-glyceraldehyde 3-phosphate = dihydroxyacetone phosphate. The protein operates within carbohydrate biosynthesis; gluconeogenesis. Its pathway is carbohydrate degradation; glycolysis; D-glyceraldehyde 3-phosphate from glycerone phosphate: step 1/1. Its function is as follows. Involved in the gluconeogenesis. Catalyzes stereospecifically the conversion of dihydroxyacetone phosphate (DHAP) to D-glyceraldehyde-3-phosphate (G3P). The polypeptide is Triosephosphate isomerase (Coxiella burnetii (strain Dugway 5J108-111)).